Here is a 262-residue protein sequence, read N- to C-terminus: Pimeloyl-[acyl-carrier protein] methyl ester esterase (262 aa).

Positions 15-242 (HLVLLHGWGL…AAHAPFISHP (228 aa)) constitute an AB hydrolase-1 domain. Substrate-binding positions include Trp-22, 82-83 (SL), and 143-147 (FLALQ). Ser-82 acts as the Nucleophile in catalysis. Residues Asp-207 and His-235 contribute to the active site. Residue His-235 participates in substrate binding.

It belongs to the AB hydrolase superfamily. Carboxylesterase BioH family. In terms of assembly, monomer.

Its subcellular location is the cytoplasm. It carries out the reaction 6-carboxyhexanoyl-[ACP] methyl ester + H2O = 6-carboxyhexanoyl-[ACP] + methanol + H(+). The protein operates within cofactor biosynthesis; biotin biosynthesis. Functionally, the physiological role of BioH is to remove the methyl group introduced by BioC when the pimeloyl moiety is complete. It allows to synthesize pimeloyl-ACP via the fatty acid synthetic pathway through the hydrolysis of the ester bonds of pimeloyl-ACP esters. This Shigella flexneri protein is Pimeloyl-[acyl-carrier protein] methyl ester esterase.